Consider the following 604-residue polypeptide: Elongation factor 4 (604 aa).

Residues 8-190 (DKIRNFSIIA…AIVNRLPPPR (183 aa)) enclose the tr-type G domain. GTP is bound by residues 20–25 (DHGKST) and 137–140 (NKID).

It belongs to the TRAFAC class translation factor GTPase superfamily. Classic translation factor GTPase family. LepA subfamily.

The protein resides in the cell inner membrane. The catalysed reaction is GTP + H2O = GDP + phosphate + H(+). Its function is as follows. Required for accurate and efficient protein synthesis under certain stress conditions. May act as a fidelity factor of the translation reaction, by catalyzing a one-codon backward translocation of tRNAs on improperly translocated ribosomes. Back-translocation proceeds from a post-translocation (POST) complex to a pre-translocation (PRE) complex, thus giving elongation factor G a second chance to translocate the tRNAs correctly. Binds to ribosomes in a GTP-dependent manner. The protein is Elongation factor 4 of Hyphomonas neptunium (strain ATCC 15444).